Here is a 287-residue protein sequence, read N- to C-terminus: SPX domain-containing protein 2 (287 aa).

In terms of domain architecture, SPX spans 1–162; that stretch reads MKFGKSLSNQ…GALIRLPFIQ (162 aa). Residues 36–50 are compositionally biased toward basic and acidic residues; that stretch reads EPRSVENRPNKRSRS. Disordered stretches follow at residues 36–61 and 194–213; these read EPRS…DPTV and KSRN…VKTG.

The protein localises to the nucleus. Functionally, may inhibit PHR1 DNA-binding activity in a Pi-dependent manner. In Arabidopsis thaliana (Mouse-ear cress), this protein is SPX domain-containing protein 2.